The following is a 255-amino-acid chain: ATP-dependent L-serine kinase (255 aa).

Glu36 is an active-site residue. O-phospho-L-serine is bound at residue Val74. A Mg(2+)-binding site is contributed by Asp75. O-phospho-L-serine is bound by residues Gly76, His77, His78, Trp108, Lys234, Thr236, and His238.

This sequence belongs to the SerK family. The cofactor is Mg(2+).

The enzyme catalyses L-serine + ATP = O-phospho-L-serine + ADP + H(+). Its function is as follows. Free serine kinase that uses ATP to phosphorylate L-serine to yield O-phospho-L-serine and ADP. This is ATP-dependent L-serine kinase from Desulfurococcus mucosus (strain ATCC 35584 / DSM 2162 / JCM 9187 / O7/1).